Here is a 1256-residue protein sequence, read N- to C-terminus: Bifunctional autolysin (1256 aa).

The first 29 residues, 1-29 (MAKKFNYKLPSMVALTLVGSAVTAHQVQA), serve as a signal peptide directing secretion. The segment covering 103–138 (GDTRANQSATTNNTQPVAKSTSTTAPKTNTNVTNAG) has biased composition (polar residues). 3 disordered regions span residues 103 to 151 (GDTR…NSEN), 172 to 214 (KTAA…KTSL), and 419 to 440 (TQST…PSTG). 2 stretches are compositionally biased toward low complexity: residues 172–196 (KTAA…KVTT) and 421–439 (STTT…KPST). The segment at 199–775 (ASAQPRSVAA…AVAQPKTAVK (577 aa)) is N-acetylmuramoyl-L-alanine amidase. GW domains are found at residues 443–517 (TVAA…YNTA), 519–593 (SPVN…DTAK), 612–686 (TVSS…YNNA), 688–762 (SPVN…VPAA), 784–859 (TTQT…VQNL), 861–936 (KEVK…APTA), and 943–1017 (AAKD…KELI). The segment at 776-1256 (AYTVTKPQTT…GKYFDIPQYK (481 aa)) is endo-beta-N-acetylglucosaminidase.

In the N-terminal section; belongs to the N-acetylmuramoyl-L-alanine amidase 2 family. The protein in the C-terminal section; belongs to the glycosyl hydrolase 73 family. In terms of assembly, oligomer; forms a ring structure at the cell surface which is important for efficient partitioning of daughter cells after cell division. Post-translationally, undergoes proteolytic processing to generate the two extracellular lytic enzymes, probably at the septal region on the cell surface.

The protein localises to the secreted. It carries out the reaction Hydrolyzes the link between N-acetylmuramoyl residues and L-amino acid residues in certain cell-wall glycopeptides.. It catalyses the reaction an N(4)-(oligosaccharide-(1-&gt;3)-[oligosaccharide-(1-&gt;6)]-beta-D-Man-(1-&gt;4)-beta-D-GlcNAc-(1-&gt;4)-alpha-D-GlcNAc)-L-asparaginyl-[protein] + H2O = an oligosaccharide-(1-&gt;3)-[oligosaccharide-(1-&gt;6)]-beta-D-Man-(1-&gt;4)-D-GlcNAc + N(4)-(N-acetyl-beta-D-glucosaminyl)-L-asparaginyl-[protein]. In terms of biological role, endohydrolysis of the di-N-acetylchitobiosyl unit in high-mannose glycopeptides and glycoproteins containing the -[(Man)5(GlcNAc)2]-Asn structure. One N-acetyl-D-glucosamine residue remains attached to the protein; the rest of the oligosaccharide is released intact. Cleaves the peptidoglycan connecting the daughter cells at the end of the cell division cycle, resulting in the separation of the two newly divided cells. Acts as an autolysin in penicillin-induced lysis. The chain is Bifunctional autolysin (atl) from Staphylococcus aureus (strain NCTC 8325 / PS 47).